The following is a 113-amino-acid chain: Small ribosomal subunit protein uS17 (113 aa).

The protein belongs to the universal ribosomal protein uS17 family. Part of the 30S ribosomal subunit.

In terms of biological role, one of the primary rRNA binding proteins, it binds specifically to the 5'-end of 16S ribosomal RNA. This chain is Small ribosomal subunit protein uS17, found in Pyrococcus abyssi (strain GE5 / Orsay).